Here is a 196-residue protein sequence, read N- to C-terminus: Probable GTP-binding protein EngB (196 aa).

Residues 22 to 196 (NLPEIALAGR…GNWIEDKISQ (175 aa)) enclose the EngB-type G domain. Residues 30 to 37 (GRSNVGKS), 57 to 61 (GKTQT), 75 to 78 (DVPG), 142 to 145 (TKMD), and 175 to 177 (FSS) each bind GTP. The Mg(2+) site is built by Ser37 and Thr59.

The protein belongs to the TRAFAC class TrmE-Era-EngA-EngB-Septin-like GTPase superfamily. EngB GTPase family. It depends on Mg(2+) as a cofactor.

Its function is as follows. Necessary for normal cell division and for the maintenance of normal septation. This Lactobacillus acidophilus (strain ATCC 700396 / NCK56 / N2 / NCFM) protein is Probable GTP-binding protein EngB.